The sequence spans 460 residues: Amino acid transporter AVT6A (460 aa).

The next 11 helical transmembrane spans lie at 45 to 65 (FSGA…MALP), 66 to 86 (ATMK…MAFL), 120 to 140 (ILLQ…YMII), 172 to 192 (AAIL…FKRI), 199 to 219 (SALS…ISIM), 238 to 258 (LTSF…FICH), 281 to 301 (ALML…LLFG), 336 to 356 (LMLV…GLLF), 371 to 391 (CLTA…PSIW), 394 to 414 (FQFT…ASII), and 427 to 447 (TTLA…AIYS).

Belongs to the amino acid/polyamine transporter 2 family. Amino acid/auxin permease (AAAP) (TC 2.A.18.6) subfamily.

Its subcellular location is the membrane. The sequence is that of Amino acid transporter AVT6A from Arabidopsis thaliana (Mouse-ear cress).